A 585-amino-acid chain; its full sequence is GRR1-like protein 1 (585 aa).

The F-box domain occupies 1 to 48 (MGLRFPPKVLEHILSFIDSNEDRNSVSLVCKSWFETERKTRKRVFVGN). Lys70 is a binding site for 1D-myo-inositol hexakisphosphate. Residues 77–78 (DY) form an interaction with auxin-responsive proteins region. 1D-myo-inositol hexakisphosphate-binding positions include 109 to 110 (KR) and Arg340. The segment at 343–348 (PSEPDL) is interaction with auxin-responsive proteins. A 1D-myo-inositol hexakisphosphate-binding site is contributed by 397 to 399 (CFR). The segment at 401–405 (CVIEP) is interaction with auxin-responsive proteins. Arg432 contacts 1D-myo-inositol hexakisphosphate. The interval 460–461 (AF) is interaction with auxin-responsive proteins. Residues 480-481 (KK) and Arg505 each bind 1D-myo-inositol hexakisphosphate.

As to quaternary structure, part of a SCF (SKP1-cullin-F-box) protein ligase complex. Interacts with CUL1, SKP1A/ASK1 and SKP1B/ASK2. Interacts with Aux/IAA proteins (IAA7 and IAA12) in an auxin-dependent manner. In terms of tissue distribution, ubiquitous.

The protein resides in the nucleus. The protein operates within protein modification; protein ubiquitination. Its function is as follows. Component of SCF(ASK-cullin-F-box) E3 ubiquitin ligase complexes, which may mediate the ubiquitination and subsequent proteasomal degradation of target proteins. Auxin receptor that mediates Aux/IAA proteins proteasomal degradation and auxin-regulated transcription. Involved in embryogenesis regulation by auxin. Confers sensitivity to the virulent bacterial pathogen P.syringae. Mediates glucose repression in yeast. The chain is GRR1-like protein 1 (GRH1) from Arabidopsis thaliana (Mouse-ear cress).